The chain runs to 164 residues: Small ribosomal subunit protein uS3m (164 aa).

Residues Met-1 to Leu-23 constitute a mitochondrion transit peptide.

This sequence belongs to the universal ribosomal protein uS3 family. In terms of assembly, component of the mitochondrial ribosome small subunit (28S) which comprises a 12S rRNA and about 30 distinct proteins.

It localises to the mitochondrion. This Caenorhabditis elegans protein is Small ribosomal subunit protein uS3m (mrps-24).